We begin with the raw amino-acid sequence, 295 residues long: Small ribosomal subunit protein uS2 (295 aa).

The tract at residues 273–295 (WAASSAPAAETLADPAADPSVKW) is disordered. The span at 274-295 (AASSAPAAETLADPAADPSVKW) shows a compositional bias: low complexity.

Belongs to the universal ribosomal protein uS2 family. Component of the small ribosomal subunit. Mature ribosomes consist of a small (40S) and a large (60S) subunit. The 40S subunit contains about 33 different proteins and 1 molecule of RNA (18S). The 60S subunit contains about 49 different proteins and 3 molecules of RNA (25S, 5.8S and 5S). Interacts with RPS21.

The protein resides in the cytoplasm. Required for the assembly and/or stability of the 40S ribosomal subunit. Required for the processing of the 20S rRNA-precursor to mature 18S rRNA in a late step of the maturation of 40S ribosomal subunits. The chain is Small ribosomal subunit protein uS2 from Paracoccidioides lutzii (strain ATCC MYA-826 / Pb01) (Paracoccidioides brasiliensis).